The primary structure comprises 356 residues: 1-deoxy-D-xylulose 5-phosphate reductoisomerase (356 aa).

Residues T7, G8, S9, I10, G31, N33, and N111 each contribute to the NADPH site. A 1-deoxy-D-xylulose 5-phosphate-binding site is contributed by K112. E113 provides a ligand contact to NADPH. D131 serves as a coordination point for Mn(2+). Residues S132, E133, S155, and H178 each coordinate 1-deoxy-D-xylulose 5-phosphate. Residue E133 coordinates Mn(2+). An NADPH-binding site is contributed by G184. 1-deoxy-D-xylulose 5-phosphate-binding residues include S191, N196, K197, and E200. E200 contacts Mn(2+).

This sequence belongs to the DXR family. The cofactor is Mg(2+). Mn(2+) is required as a cofactor.

It catalyses the reaction 2-C-methyl-D-erythritol 4-phosphate + NADP(+) = 1-deoxy-D-xylulose 5-phosphate + NADPH + H(+). The protein operates within isoprenoid biosynthesis; isopentenyl diphosphate biosynthesis via DXP pathway; isopentenyl diphosphate from 1-deoxy-D-xylulose 5-phosphate: step 1/6. Catalyzes the NADPH-dependent rearrangement and reduction of 1-deoxy-D-xylulose-5-phosphate (DXP) to 2-C-methyl-D-erythritol 4-phosphate (MEP). The polypeptide is 1-deoxy-D-xylulose 5-phosphate reductoisomerase (Campylobacter jejuni subsp. doylei (strain ATCC BAA-1458 / RM4099 / 269.97)).